The sequence spans 1101 residues: Protein diaphanous homolog 2 (1101 aa).

Position 1 is an N-acetylmethionine (Met1). The segment at 1 to 44 (MEQPGAAASGAGGGSEEPGGGRSNKRSAGNRAANEEETKNKPKL) is disordered. The span at 10–22 (GAGGGSEEPGGGR) shows a compositional bias: gly residues. The region spanning 98-464 (SLNLSEKEVL…QIVLHCSGMD (367 aa)) is the GBD/FH3 domain. 2 coiled-coil regions span residues 366-418 (KEKE…MLKD) and 487-547 (KAKV…SSSG). Residues 536–546 (RTQAQVLSSSS) show a composition bias toward polar residues. Disordered regions lie at residues 536–594 (RTQA…PPPP), 1010–1048 (NKRREMEEKTRRAKLAKEKAEQEKLERQKKKKQLIDINK), and 1070–1101 (RDRRKRIPRNPDNRRVPLERSRSRHNGAISSK). The span at 549 to 594 (PGPPAAPPLPGVGPPPPPPAPPLPGGAPLPPPPPPLPGMMGIPPPP) shows a compositional bias: pro residues. Residues 549–623 (PGPPAAPPLP…PPPGISLNLP (75 aa)) form the FH1 domain. An FH2 domain is found at 628–1028 (QKKMYKPEVS…TRRAKLAKEK (401 aa)). A coiled-coil region spans residues 903 to 1053 (SASKVSAQIL…IDINKEGDET (151 aa)). Basic and acidic residues-rich tracts occupy residues 1010–1035 (NKRREMEEKTRRAKLAKEKAEQEKLE) and 1078–1090 (RNPDNRRVPLERS). One can recognise a DAD domain in the interval 1051-1081 (DETGVMDNLLEALQSGAAFRDRRKRIPRNPD).

Belongs to the formin homology family. Diaphanous subfamily. As to quaternary structure, isoform 3 interacts with RHOD in the GTP-bound form. Expressed in testis, ovary, small intestine, prostate, lung, liver, kidney and leukocytes.

It is found in the cytoplasm. It localises to the cytosol. Its subcellular location is the early endosome. In terms of biological role, could be involved in oogenesis. Involved in the regulation of endosome dynamics. Implicated in a novel signal transduction pathway, in which isoform 3 and CSK are sequentially activated by RHOD to regulate the motility of early endosomes through interactions with the actin cytoskeleton. This Homo sapiens (Human) protein is Protein diaphanous homolog 2 (DIAPH2).